A 242-amino-acid polypeptide reads, in one-letter code: Ribonuclease 3 (242 aa).

Residues 12–139 enclose the RNase III domain; it reads ANELLEALGT…LIGATFLEHG (128 aa). Glu-51 serves as a coordination point for Mg(2+). Asp-55 is an active-site residue. Mg(2+) is bound by residues Asp-125 and Glu-128. Residue Glu-128 is part of the active site. Positions 165–236 constitute a DRBM domain; sequence LDWKTSLTVK…AEAGWKSLDS (72 aa).

Belongs to the ribonuclease III family. As to quaternary structure, homodimer. The cofactor is Mg(2+).

It localises to the cytoplasm. The catalysed reaction is Endonucleolytic cleavage to 5'-phosphomonoester.. Functionally, digests double-stranded RNA. Involved in the processing of primary rRNA transcript to yield the immediate precursors to the large and small rRNAs (23S and 16S). Processes some mRNAs, and tRNAs when they are encoded in the rRNA operon. Processes pre-crRNA and tracrRNA of type II CRISPR loci if present in the organism. In Bifidobacterium longum (strain NCC 2705), this protein is Ribonuclease 3.